We begin with the raw amino-acid sequence, 87 residues long: Selenoprotein W (87 aa).

A cross-link (cysteinyl-selenocysteine (Cys-Sec); redox-active) is located at residues 10–13 (CGAU). Residue Sec13 is a non-standard amino acid, selenocysteine. Residue Cys37 is modified to S-glutathionyl cysteine.

This sequence belongs to the SelWTH family. Selenoprotein W subfamily. As to quaternary structure, interacts with DPYSL2, PRDX1, YWHAB, YWHAG, HSP70 and HSP90. Highest levels detected in skeletal muscle, tongue, heart and brain. Expressed at significantly higher levels in female skeletal muscle than in male and at slightly higher levels in female cardiac muscle than in male (at protein level). Also detected at low levels in liver.

It localises to the cytoplasm. Functionally, plays a role as a glutathione (GSH)-dependent antioxidant. May be involved in a redox-related process. May play a role in the myopathies of selenium deficiency. The protein is Selenoprotein W of Macaca mulatta (Rhesus macaque).